Reading from the N-terminus, the 341-residue chain is Heterogeneous nuclear ribonucleoproteins A2/B1 (341 aa).

RRM domains follow at residues 9–92 (RKLF…ESGK) and 100–179 (KKLF…LSRQ). Residue Lys-10 forms a Glycyl lysine isopeptide (Lys-Gly) (interchain with G-Cter in SUMO2) linkage. Residue Ser-17 is modified to Phosphoserine. Residue Arg-26 is modified to Omega-N-methylarginine. Ser-73 bears the Phosphoserine mark. Residue Lys-92 is modified to N6,N6-dimethyllysine; alternate. A Glycyl lysine isopeptide (Lys-Gly) (interchain with G-Cter in SUMO2); alternate cross-link involves residue Lys-92. Residues Lys-100, Lys-108, and Lys-125 each participate in a glycyl lysine isopeptide (Lys-Gly) (interchain with G-Cter in SUMO2) cross-link. Phosphothreonine is present on Thr-128. A Phosphoserine modification is found at Ser-137. Lys-140 is covalently cross-linked (Glycyl lysine isopeptide (Lys-Gly) (interchain with G-Cter in SUMO2)). Position 147 is a phosphothreonine (Thr-147). Glycyl lysine isopeptide (Lys-Gly) (interchain with G-Cter in SUMO2); alternate cross-links involve residues Lys-156 and Lys-161. 2 positions are modified to N6-acetyllysine; alternate: Lys-156 and Lys-161. Position 164 is a phosphothreonine (Thr-164). Lys-174 participates in a covalent cross-link: Glycyl lysine isopeptide (Lys-Gly) (interchain with G-Cter in SUMO2). 2 positions are modified to phosphoserine: Ser-177 and Ser-189. The tract at residues 181–341 (MQEVQSSRSG…SGGYGGRSRY (161 aa)) is disordered. Residues 190 to 211 (GRGGNFGFGDSRGGGGNFGPGP) show a composition bias toward gly residues. Arg-191 is modified (asymmetric dimethylarginine; alternate). Arg-191 carries the post-translational modification Dimethylated arginine; alternate. The residue at position 191 (Arg-191) is an Omega-N-methylarginine; alternate. Ser-200 carries the post-translational modification Phosphoserine. Position 201 is an asymmetric dimethylarginine; alternate (Arg-201). A Dimethylated arginine; alternate modification is found at Arg-201. Arg-201 is modified (omega-N-methylarginine; alternate). Phosphoserine is present on Ser-213. An Omega-N-methylarginine modification is found at Arg-216. Residues Ser-219 and Ser-224 each carry the phosphoserine modification. Arg-226 is modified (omega-N-methylarginine). Ser-247 bears the Phosphoserine mark. Arg-254 is modified (asymmetric dimethylarginine; alternate). Residue Arg-254 is modified to Omega-N-methylarginine; alternate. The segment at 296 to 335 (QQPSNYGPMKSGNFGGSRNMGGPYGGGNYGPGGSGGSGGY) is nuclear targeting sequence. A compositionally biased stretch (gly residues) spans 308–341 (NFGGSRNMGGPYGGGNYGPGGSGGSGGYGGRSRY). Residue Ser-312 is modified to Phosphoserine. The residue at position 313 (Arg-313) is an Omega-N-methylarginine. Tyr-319 bears the Phosphotyrosine mark. A phosphoserine mark is found at Ser-329 and Ser-332. Tyr-335 carries the post-translational modification Phosphotyrosine. An Omega-N-methylarginine modification is found at Arg-338.

In terms of assembly, identified in the spliceosome C complex. Identified in a IGF2BP1-dependent mRNP granule complex containing untranslated mRNAs. Interacts with IGF2BP1. Interacts with C9orf72. Interacts with DGCR8. Interacts with TARDBP. Interacts with CKAP5. Interacts with PPIA/CYPA. Interacts (via C-terminus) with FAM76B; the interaction results in retention of HNRNPA2B1 in the nucleus and inhibition of the NF-kappa-B-mediated inflammatory pathway. Interacts with NF-kappa-B inhibitors NFKBIA and NFKBIE; the interaction may be mediated by the RRM2 domain of HNRNPA2B1, and HNRNPA2B1 may interact simultaneously with FAM76B and either NFKBIA or NFKBIE to form a complex. Post-translationally, sumoylated in exosomes, promoting miRNAs-binding. Asymmetric dimethylation at Arg-254 constitutes the major methylation site. According to a report, methylation affects subcellular location and promotes nuclear localization. According to another report, methylation at Arg-254 does not influence nucleocytoplasmic shuttling.

It localises to the nucleus. The protein localises to the nucleoplasm. Its subcellular location is the cytoplasmic granule. The protein resides in the secreted. It is found in the extracellular exosome. In terms of biological role, heterogeneous nuclear ribonucleoprotein (hnRNP) that associates with nascent pre-mRNAs, packaging them into hnRNP particles. The hnRNP particle arrangement on nascent hnRNA is non-random and sequence-dependent and serves to condense and stabilize the transcripts and minimize tangling and knotting. Packaging plays a role in various processes such as transcription, pre-mRNA processing, RNA nuclear export, subcellular location, mRNA translation and stability of mature mRNAs. Forms hnRNP particles with at least 20 other different hnRNP and heterogeneous nuclear RNA in the nucleus. Involved in transport of specific mRNAs to the cytoplasm in oligodendrocytes and neurons: acts by specifically recognizing and binding the A2RE (21 nucleotide hnRNP A2 response element) or the A2RE11 (derivative 11 nucleotide oligonucleotide) sequence motifs present on some mRNAs, and promotes their transport to the cytoplasm. Specifically binds single-stranded telomeric DNA sequences, protecting telomeric DNA repeat against endonuclease digestion. Also binds other RNA molecules, such as primary miRNA (pri-miRNAs): acts as a nuclear 'reader' of the N6-methyladenosine (m6A) mark by specifically recognizing and binding a subset of nuclear m6A-containing pri-miRNAs. Binding to m6A-containing pri-miRNAs promotes pri-miRNA processing by enhancing binding of DGCR8 to pri-miRNA transcripts. Involved in miRNA sorting into exosomes following sumoylation, possibly by binding (m6A)-containing pre-miRNAs. Acts as a regulator of efficiency of mRNA splicing, possibly by binding to m6A-containing pre-mRNAs. Plays a role in the splicing of pyruvate kinase PKM by binding repressively to sequences flanking PKM exon 9, inhibiting exon 9 inclusion and resulting in exon 10 inclusion and production of the PKM M2 isoform. This chain is Heterogeneous nuclear ribonucleoproteins A2/B1 (HNRNPA2B1), found in Bos taurus (Bovine).